We begin with the raw amino-acid sequence, 262 residues long: MSDVLTRICDDKRALVQARKSARPLSAVEDDARSADPAGGFIRALRRTVDGGRYGLIAEIKKASPSKGLIRPDFDPPSLARAYRGGGATCLSVLTDEPYFQGCDDYLLSARAAVDLPVLRKDFMVDPYQIAESRALGADCILIIMAALSDAQAVEIEDAAIAWGLDVLVEVHNREELDRALALKTPLLGVNNRNLKTLAVDIATTEELAAHVPADRMLVAESGLYSPADLSRMAAVGARCFLVGESLMRQEDVSAATRALLA.

The protein belongs to the TrpC family.

It carries out the reaction 1-(2-carboxyphenylamino)-1-deoxy-D-ribulose 5-phosphate + H(+) = (1S,2R)-1-C-(indol-3-yl)glycerol 3-phosphate + CO2 + H2O. Its pathway is amino-acid biosynthesis; L-tryptophan biosynthesis; L-tryptophan from chorismate: step 4/5. Functionally, participates in the tryptophan-dependent indole-3-acetic acid production, which is a phytohormone released by A.brasilense. The sequence is that of Indole-3-glycerol phosphate synthase (trpC) from Azospirillum brasilense.